A 105-amino-acid chain; its full sequence is Large ribosomal subunit protein P2 (105 aa).

The tract at residues 84–105 is disordered; the sequence is AEAKKEEPEEEADDDMGFGLFD.

Belongs to the eukaryotic ribosomal protein P1/P2 family. As to quaternary structure, P1 and P2 exist as dimers at the large ribosomal subunit. Post-translationally, phosphorylated.

Functionally, plays an important role in the elongation step of protein synthesis. In Leishmania donovani, this protein is Large ribosomal subunit protein P2 (ARP-1).